The chain runs to 325 residues: Olfactory receptor 1S1 (325 aa).

At 1–38 (MKTFSSFLQIGRNMHQGNQTTITEFILLGFFKQDEHQN) the chain is on the extracellular side. N18 carries an N-linked (GlcNAc...) asparagine glycan. A helical membrane pass occupies residues 39 to 62 (LLFVLFLGMYLVTVIGNGLIIVAI). The Cytoplasmic segment spans residues 63-70 (SLDTYLHT). The helical transmembrane segment at 71-92 (PMYLFLANLSFADISSISNSVP) threads the bilayer. The Extracellular segment spans residues 93 to 113 (KMLVNIQTKSQSISYESCITQ). An intrachain disulfide couples C110 to C202. Residues 114–133 (MYFSIVFVVIDNLLLGTMAY) form a helical membrane-spanning segment. Residues 134 to 152 (DHFVAICHPLNYTILMRPR) lie on the Cytoplasmic side of the membrane. The helical transmembrane segment at 153–171 (FGILLTVISWFLSNIIALT) threads the bilayer. Topologically, residues 172-208 (HTLLLIQLLFCNHNTLPHFFCDLAPLLKLSCSDTLIN) are extracellular. The helical transmembrane segment at 209-232 (ELVLFIVGLSVIIFPFTLSFFSYV) threads the bilayer. The Cytoplasmic segment spans residues 233–249 (CIIRAVLRVSSTQGKWK). The helical transmembrane segment at 250 to 272 (AFSTCGSHLTVVLLFYGTIVGVY) threads the bilayer. At 273-285 (FFPSSTHPEDTDK) the chain is on the extracellular side. A helical membrane pass occupies residues 286–305 (IGAVLFTVVTPMINPFIYSL). The Cytoplasmic portion of the chain corresponds to 306-325 (RNKDMKGALRKLINRKISSL).

The protein belongs to the G-protein coupled receptor 1 family.

Its subcellular location is the cell membrane. In terms of biological role, odorant receptor. This is Olfactory receptor 1S1 (OR1S1) from Homo sapiens (Human).